Consider the following 675-residue polypeptide: GAVETLQGKAATGELLEKSVNTIRFLAIDAVEKANSGHPGLPMGCAPMGHVLYDEVMRYNPKNPYWFNRDRFVLSAGHGCMLQYALLHLAGYDSVKEEDLKQFRQWGSRTPGHPENFETPGVEVTTGPLGQGIANAVGLALAEKHLAARFNKPDSEIVDHYTYVILGDGCQMEGIANEACSLAGHWGLGKLIAFYDDNHISIDGDTEIAFTEDVSTRFEALGWHTIWVKNGNTGYDDIRAAIKEAKAVTDKPTLIKVTTTIGFGSPNKANSYSVHGSALGAKEVEATRQNLGWPYDTFFVPEDVKSHWSRHTPEGAALEADWNAKFAEYEKKYADDAATLKSIITGELPTGWVDALPKYTPESPGDATRNLSQQCLNALANVVPGLIGGSADLASSNMTLLKMFGDFQKDTAEERNVRFGVREHGMGAICNGIALHSPGFVPYCATFFVFTDYMRGAMRISALSEAGVIYVMTHDSIGLGEDGPTHQPIEHLVSFRAMPNILMLRPADGNETAGAYKVAVLNRKRPSILALSRQKLPHLPGTSIEGVEKGGYTISDNSTGNKPDLIVMGTGSELEIAAKAADELRKEGKTVRVVSFVSWELFDEQSDEYKESVLPAAVTARISIEAGSTLGWQKYVGAQGKAIGIDKFGASAPAGTIYKEYGITVESIIAAAKSF.

Thiamine diphosphate contacts are provided by residues His-78 and 127-129; that span reads GPL. Asp-168 is a binding site for Mg(2+). The thiamine diphosphate site is built by Gly-169, Glu-173, and Asn-198. 2 residues coordinate Mg(2+): Asn-198 and Ile-200. His-275 is a thiamine diphosphate binding site. Positions 275, 369, and 396 each coordinate substrate. Thiamine diphosphate-binding positions include Glu-423 and 450 to 453; that span reads FTDY. Glu-423 acts as the Proton donor in catalysis. Residues His-474, Asp-482, and Arg-533 each coordinate substrate.

Homodimer. Mg(2+) is required as a cofactor. Ca(2+) serves as cofactor. Requires Mn(2+) as cofactor. It depends on Co(2+) as a cofactor. The cofactor is thiamine diphosphate.

Its subcellular location is the plastid. The protein resides in the chloroplast thylakoid membrane. It carries out the reaction D-sedoheptulose 7-phosphate + D-glyceraldehyde 3-phosphate = aldehydo-D-ribose 5-phosphate + D-xylulose 5-phosphate. It participates in carbohydrate biosynthesis; Calvin cycle. Its function is as follows. Catalyzes the reversible transfer of a two-carbon ketol group from fructose-6-phosphate or sedoheptulose-7-phosphate to glyceraldehyde-3-phosphate to yield xylulose-5-phosphate and erythrose-4-phosphate or ribose-5-phosphate, respectively. The sequence is that of Transketolase, chloroplastic from Zea mays (Maize).